Consider the following 552-residue polypeptide: Urocanate hydratase (552 aa).

Residues 49 to 50 (GG), Gln-127, 173 to 175 (GMG), Glu-193, Arg-198, 239 to 240 (NA), 260 to 264 (QTSAH), 270 to 271 (YV), and Tyr-319 contribute to the NAD(+) site. Cys-407 is a catalytic residue. Gly-489 contacts NAD(+).

It belongs to the urocanase family. In terms of assembly, composed of at least two subunits. NAD(+) is required as a cofactor.

Its subcellular location is the cytoplasm. It catalyses the reaction 4-imidazolone-5-propanoate = trans-urocanate + H2O. The protein operates within amino-acid degradation; L-histidine degradation into L-glutamate; N-formimidoyl-L-glutamate from L-histidine: step 2/3. Catalyzes the conversion of urocanate to 4-imidazolone-5-propionate. The chain is Urocanate hydratase from Bacillus subtilis (strain 168).